Reading from the N-terminus, the 724-residue chain is Pediocin PA-1 transport/processing ATP-binding protein PedD (724 aa).

The Peptidase C39 domain occupies 13 to 140; sequence QVDENDCGLA…KEWTQIAIII (128 aa). C19 is an active-site residue. 6 helical membrane passes run 170 to 190, 207 to 227, 284 to 304, 307 to 327, 396 to 416, and 426 to 446; these read IGLI…GAYF, LSLV…INYI, TTLT…FLAY, INLF…VWLF, IKAA…TFFV, and LLTY…IINL. The region spanning 170-452 is the ABC transmembrane type-1 domain; sequence IGLIITAAAI…IINLQPKLQA (283 aa). Residues 486-722 form the ABC transporter domain; sequence IEVNHVSFNY…NGYYARLIHN (237 aa). ATP is bound at residue 519–526; the sequence is GMSGSGKT.

It belongs to the ABC transporter superfamily. Pediocin PA-1 exporter (TC 3.A.1.112.2) family.

It localises to the cell membrane. Its function is as follows. Involved in the export process of the bacteriocin pediocin PA-1/AcH. Is also essential for pediocin production. The sequence is that of Pediocin PA-1 transport/processing ATP-binding protein PedD (pedD) from Pediococcus acidilactici.